The chain runs to 417 residues: Snake venom metalloproteinase aculysin-1 (417 aa).

The first 20 residues, 1 to 20, serve as a signal peptide directing secretion; sequence MIQVLLVTICLAAFPYQGSS. Positions 21–189 are excised as a propeptide; that stretch reads IMLESGKVND…KKPSWLNLTP (169 aa). In terms of domain architecture, Peptidase M12B spans 197 to 392; the sequence is TSVNLQLIVD…KKPKCIHKKS (196 aa). Intrachain disulfides connect Cys-308–Cys-387, Cys-349–Cys-371, and Cys-351–Cys-354. His-333 is a binding site for Zn(2+). Glu-334 is a catalytic residue. The Zn(2+) site is built by His-337 and His-343. Positions 393-417 are excised as a propeptide; the sequence is LKTDTVSTSVSGNEPLDDNVDGFHA. The tract at residues 398–417 is disordered; the sequence is VSTSVSGNEPLDDNVDGFHA. Acidic residues predominate over residues 407–417; it reads PLDDNVDGFHA.

This sequence belongs to the venom metalloproteinase (M12B) family. P-I subfamily. As to quaternary structure, monomer. Zn(2+) is required as a cofactor. In terms of tissue distribution, expressed by the venom gland.

It localises to the secreted. Its function is as follows. This protein is an alkaline zinc metalloprotease from snake venom that possesses weak hemorrhagic activity. The polypeptide is Snake venom metalloproteinase aculysin-1 (Deinagkistrodon acutus (Hundred-pace snake)).